Reading from the N-terminus, the 468-residue chain is Uronate isomerase (468 aa).

Belongs to the metallo-dependent hydrolases superfamily. Uronate isomerase family.

The enzyme catalyses D-glucuronate = D-fructuronate. It carries out the reaction aldehydo-D-galacturonate = keto-D-tagaturonate. The protein operates within carbohydrate metabolism; pentose and glucuronate interconversion. This chain is Uronate isomerase, found in Marinomonas sp. (strain MWYL1).